The sequence spans 489 residues: Rhamnulokinase (489 aa).

13–17 (ASSGR) serves as a coordination point for ATP. An intrachain disulfide couples Cys68 to Cys222. Substrate-binding positions include Gly83 and 236–238 (HDT). The active-site Proton acceptor is the Asp237. Thr259 lines the ATP pocket. Asn296 provides a ligand contact to substrate. Gln304 is a binding site for ATP. An intrachain disulfide couples Cys353 to Cys370. Residue Gly402 coordinates ATP. Cys413 and Cys417 are disulfide-bonded.

The protein belongs to the rhamnulokinase family. Mg(2+) is required as a cofactor.

It catalyses the reaction L-rhamnulose + ATP = L-rhamnulose 1-phosphate + ADP + H(+). Its pathway is carbohydrate degradation; L-rhamnose degradation; glycerone phosphate from L-rhamnose: step 2/3. Functionally, involved in the catabolism of L-rhamnose (6-deoxy-L-mannose). Catalyzes the transfer of the gamma-phosphate group from ATP to the 1-hydroxyl group of L-rhamnulose to yield L-rhamnulose 1-phosphate. The protein is Rhamnulokinase of Salmonella choleraesuis (strain SC-B67).